Here is a 305-residue protein sequence, read N- to C-terminus: Glycine--tRNA ligase alpha subunit (305 aa).

The protein belongs to the class-II aminoacyl-tRNA synthetase family. In terms of assembly, tetramer of two alpha and two beta subunits.

The protein localises to the cytoplasm. It catalyses the reaction tRNA(Gly) + glycine + ATP = glycyl-tRNA(Gly) + AMP + diphosphate. This Streptococcus pneumoniae (strain ATCC 700669 / Spain 23F-1) protein is Glycine--tRNA ligase alpha subunit.